Reading from the N-terminus, the 150-residue chain is Probable deoxyuridine 5'-triphosphate nucleotidohydrolase (150 aa).

The protein belongs to the dCTP deaminase family. Archaeal dUTPase subfamily.

It catalyses the reaction dUTP + H2O = dUMP + diphosphate + H(+). Its pathway is pyrimidine metabolism; dUMP biosynthesis; dUMP from dCTP (dUTP route): step 2/2. Its function is as follows. This enzyme is involved in nucleotide metabolism: it produces dUMP, the immediate precursor of thymidine nucleotides and it decreases the intracellular concentration of dUTP so that uracil cannot be incorporated into DNA. In Methanothermobacter thermautotrophicus (strain ATCC 29096 / DSM 1053 / JCM 10044 / NBRC 100330 / Delta H) (Methanobacterium thermoautotrophicum), this protein is Probable deoxyuridine 5'-triphosphate nucleotidohydrolase.